The primary structure comprises 464 residues: Protein FAM90A8 (464 aa).

Disordered regions lie at residues 1–42, 69–389, and 415–437; these read MMAR…DPRL, VPAT…HDGA, and HSPEKPGAFLAQSPHVSEKSEAP. Basic and acidic residues-rich tracts occupy residues 74–89 and 97–114; these read GKKEGKENLKPWKPRG and NKDKGEKEERPRQQDPQR. A compositionally biased stretch (low complexity) spans 180–197; the sequence is LASLSPLRKASLSSSSSL.

It belongs to the FAM90 family.

This chain is Protein FAM90A8 (FAM90A8), found in Homo sapiens (Human).